The chain runs to 160 residues: Cytochrome b6-f complex subunit 4 (160 aa).

The next 3 membrane-spanning stretches (helical) occupy residues 36–56 (ILFT…GLAI), 95–115 (LLGI…PFIE), and 131–151 (AVFL…CFPI).

Belongs to the cytochrome b family. PetD subfamily. In terms of assembly, the 4 large subunits of the cytochrome b6-f complex are cytochrome b6, subunit IV (17 kDa polypeptide, PetD), cytochrome f and the Rieske protein, while the 4 small subunits are PetG, PetL, PetM and PetN. The complex functions as a dimer.

It is found in the cellular thylakoid membrane. In terms of biological role, component of the cytochrome b6-f complex, which mediates electron transfer between photosystem II (PSII) and photosystem I (PSI), cyclic electron flow around PSI, and state transitions. The protein is Cytochrome b6-f complex subunit 4 of Picosynechococcus sp. (strain ATCC 27264 / PCC 7002 / PR-6) (Agmenellum quadruplicatum).